A 547-amino-acid polypeptide reads, in one-letter code: Chaperonin GroEL (547 aa).

ATP contacts are provided by residues threonine 30 to proline 33, lysine 51, aspartate 87 to threonine 91, glycine 415, and aspartate 496. The segment at aspartate 528 to tyrosine 547 is disordered. Gly residues predominate over residues glycine 538 to tyrosine 547.

This sequence belongs to the chaperonin (HSP60) family. In terms of assembly, forms a cylinder of 14 subunits composed of two heptameric rings stacked back-to-back. Interacts with the co-chaperonin GroES.

The protein resides in the cytoplasm. It catalyses the reaction ATP + H2O + a folded polypeptide = ADP + phosphate + an unfolded polypeptide.. Functionally, together with its co-chaperonin GroES, plays an essential role in assisting protein folding. The GroEL-GroES system forms a nano-cage that allows encapsulation of the non-native substrate proteins and provides a physical environment optimized to promote and accelerate protein folding. This is Chaperonin GroEL from Chlorobium luteolum (strain DSM 273 / BCRC 81028 / 2530) (Pelodictyon luteolum).